The primary structure comprises 168 residues: Phosphopantetheine adenylyltransferase (168 aa).

T9 serves as a coordination point for substrate. Residues 9 to 10 and H17 contribute to the ATP site; that span reads TF. Positions 41, 73, and 87 each coordinate substrate. Residues 88 to 90, E98, and 123 to 129 each bind ATP; these read GLR and YQFISGT.

The protein belongs to the bacterial CoaD family. As to quaternary structure, homohexamer. Mg(2+) serves as cofactor.

Its subcellular location is the cytoplasm. It catalyses the reaction (R)-4'-phosphopantetheine + ATP + H(+) = 3'-dephospho-CoA + diphosphate. Its pathway is cofactor biosynthesis; coenzyme A biosynthesis; CoA from (R)-pantothenate: step 4/5. Its function is as follows. Reversibly transfers an adenylyl group from ATP to 4'-phosphopantetheine, yielding dephospho-CoA (dPCoA) and pyrophosphate. This Ralstonia nicotianae (strain ATCC BAA-1114 / GMI1000) (Ralstonia solanacearum) protein is Phosphopantetheine adenylyltransferase.